A 388-amino-acid chain; its full sequence is MDLLNTLVEKGLRRELPSRAEALAVLATSDDDVLDVVAAAGKVRRHWFGRRVKLNYLVNLKSGLCPEDCSYCSQRLGSKAEILKYTWLKPDEASQAAAAGLAGGAKRVCLVASGRGPTDRDVDRVSDTIKAIKDQNEGVEVCACLGLLSDGQADRLREAGADAYNHNLNTSEGTYGDITTTHTYADRVETVQKAHAAGLSACSGLIAGMGETDEDLVDVVYSLRELDPDSVPVNFLIPFEGTPLAKEWNLTPQRCLRILAMVRFVCPDVEVRIAGGREVHLRTMQPLALHLANSIFLGDYLTSEGQAGKADLEMIADAGFEVEGADQVTLPEHRAPAGGCGSEQSAGCGSHEGGGACGSAPAPRTDEARTDLVAVRRRGAGTDLAPNA.

The Radical SAM core domain maps to Trp47–Arg277. [4Fe-4S] cluster-binding residues include Cys65, Cys69, and Cys72. The [2Fe-2S] cluster site is built by Cys109, Cys142, Cys202, and Arg272. The segment at Ala335–Asp371 is disordered.

This sequence belongs to the radical SAM superfamily. Biotin synthase family. In terms of assembly, homodimer. [4Fe-4S] cluster serves as cofactor. [2Fe-2S] cluster is required as a cofactor.

It catalyses the reaction (4R,5S)-dethiobiotin + (sulfur carrier)-SH + 2 reduced [2Fe-2S]-[ferredoxin] + 2 S-adenosyl-L-methionine = (sulfur carrier)-H + biotin + 2 5'-deoxyadenosine + 2 L-methionine + 2 oxidized [2Fe-2S]-[ferredoxin]. Its pathway is cofactor biosynthesis; biotin biosynthesis; biotin from 7,8-diaminononanoate: step 2/2. Catalyzes the conversion of dethiobiotin (DTB) to biotin by the insertion of a sulfur atom into dethiobiotin via a radical-based mechanism. The polypeptide is Biotin synthase (Streptomyces avermitilis (strain ATCC 31267 / DSM 46492 / JCM 5070 / NBRC 14893 / NCIMB 12804 / NRRL 8165 / MA-4680)).